A 219-amino-acid chain; its full sequence is Cytochrome c oxidase assembly protein CtaG (219 aa).

The span at 1-13 shows a compositional bias: polar residues; sequence MDATDQGKSTSTT. The segment at 1–24 is disordered; it reads MDATDQGKSTSTTAAQAAPGKAAP. The Cytoplasmic portion of the chain corresponds to 1–29; sequence MDATDQGKSTSTTAAQAAPGKAAPRRGIG. Over residues 14–24 the composition is skewed to low complexity; the sequence is AAQAAPGKAAP. The chain crosses the membrane as a helical; Signal-anchor for type II membrane protein span at residues 30 to 52; the sequence is RDALVGGICGAVVVLMIGASYAA. The Periplasmic segment spans residues 53-219; it reads VPFYNWFCRA…GEPDKPRGSL (167 aa).

This sequence belongs to the COX11/CtaG family.

The protein localises to the cell inner membrane. Functionally, exerts its effect at some terminal stage of cytochrome c oxidase synthesis, probably by being involved in the insertion of the copper B into subunit I. The sequence is that of Cytochrome c oxidase assembly protein CtaG from Bradyrhizobium sp. (strain ORS 278).